The primary structure comprises 1096 residues: Eukaryotic translation initiation factor 3 subunit A (1096 aa).

The region spanning 323–502 is the PCI domain; that stretch reads QATRVLLATL…GSIHFGAADA (180 aa). Coiled coils occupy residues 591–643, 677–761, and 811–839; these read SERQ…IDRK, SVLR…RMQK, and KEGAEERMASAREVAEQTRRDEQEKERRA. The span at 808-852 shows a compositional bias: basic and acidic residues; the sequence is ELPKEGAEERMASAREVAEQTRRDEQEKERRAVRESQRPSKREIV. A disordered region spans residues 808–1096; that stretch reads ELPKEGAEER…ADDDRNWRQK (289 aa). A compositionally biased stretch (polar residues) spans 865–875; the sequence is AQPTQPRTISS. 3 stretches are compositionally biased toward basic and acidic residues: residues 878 to 890, 933 to 942, and 955 to 973; these read FGERFVEGERYRE, SNREQARGEA, and QRDRDQSVGKQPLMEKRGE. The segment covering 1008-1023 has biased composition (polar residues); that stretch reads DSSQRTSAATPTTQPW. Over residues 1085–1096 the composition is skewed to basic and acidic residues; it reads GAADDDRNWRQK.

It belongs to the eIF-3 subunit A family. In terms of assembly, component of the eukaryotic translation initiation factor 3 (eIF-3) complex.

The protein resides in the cytoplasm. In terms of biological role, RNA-binding component of the eukaryotic translation initiation factor 3 (eIF-3) complex, which is involved in protein synthesis of a specialized repertoire of mRNAs and, together with other initiation factors, stimulates binding of mRNA and methionyl-tRNAi to the 40S ribosome. The eIF-3 complex specifically targets and initiates translation of a subset of mRNAs involved in cell proliferation. This is Eukaryotic translation initiation factor 3 subunit A from Brugia malayi (Filarial nematode worm).